Reading from the N-terminus, the 803-residue chain is Translation initiation factor IF-2 (803 aa).

Disordered stretches follow at residues 95–125 and 138–209; these read PVVE…EKAE and EVKE…KLEQ. Residues 111–121 are compositionally biased toward polar residues; sequence VPLTSDTTNLN. Residues 138-155 show a composition bias toward basic and acidic residues; it reads EVKEEAKKTPSEKKETPK. Positions 156 to 167 are enriched in basic residues; sequence KGPRKETRRSRK. Positions 168-188 are enriched in basic and acidic residues; the sequence is PDKEDKWEREELHMTKLVEER. Positions 302 to 471 constitute a tr-type G domain; that stretch reads PRAPVVTIMG…LLQAEVLELK (170 aa). The G1 stretch occupies residues 311 to 318; sequence GHVDHGKT. 311 to 318 provides a ligand contact to GTP; it reads GHVDHGKT. The segment at 336–340 is G2; the sequence is GITQH. The interval 357–360 is G3; the sequence is DTPG. GTP contacts are provided by residues 357–361 and 411–414; these read DTPGH and NKID. The G4 stretch occupies residues 411-414; that stretch reads NKID. The segment at 447 to 449 is G5; it reads SAK.

Belongs to the TRAFAC class translation factor GTPase superfamily. Classic translation factor GTPase family. IF-2 subfamily.

It is found in the cytoplasm. Its function is as follows. One of the essential components for the initiation of protein synthesis. Protects formylmethionyl-tRNA from spontaneous hydrolysis and promotes its binding to the 30S ribosomal subunits. Also involved in the hydrolysis of GTP during the formation of the 70S ribosomal complex. This chain is Translation initiation factor IF-2, found in Coxiella burnetii (strain CbuG_Q212) (Coxiella burnetii (strain Q212)).